The following is a 544-amino-acid chain: Prolyl 4-hydroxylase subunit alpha-3 (544 aa).

The signal sequence occupies residues 1 to 24 (MGPGARLAALLVLLKLGVGDPAAA). The stretch at 227 to 260 (EDALDYLAFACYQVGNVSCALSLSREFLVYSPDN) is one TPR repeat. A glycan (N-linked (GlcNAc...) asparagine) is linked at asparagine 242. One can recognise a Fe2OG dioxygenase domain in the interval 422–529 (YAEYLQVVNY…KWVANKWIHE (108 aa)). Fe cation is bound by residues histidine 440 and aspartate 442. Asparagine 482 is a glycosylation site (N-linked (GlcNAc...) asparagine). Histidine 510 contacts Fe cation. Residue lysine 520 participates in 2-oxoglutarate binding.

Belongs to the P4HA family. In terms of assembly, heterotetramer of two alpha-3 chains and two beta chains (the beta chain is the multi-functional PDI). It depends on Fe(2+) as a cofactor. L-ascorbate serves as cofactor. N-glycosylation plays no role in the catalytic activity.

It localises to the endoplasmic reticulum lumen. It catalyses the reaction L-prolyl-[collagen] + 2-oxoglutarate + O2 = trans-4-hydroxy-L-prolyl-[collagen] + succinate + CO2. Catalyzes the post-translational formation of 4-hydroxyproline in -Xaa-Pro-Gly- sequences in collagens and other proteins. The sequence is that of Prolyl 4-hydroxylase subunit alpha-3 (P4ha3) from Rattus norvegicus (Rat).